A 124-amino-acid polypeptide reads, in one-letter code: uncharacterized protein (124 aa).

This is an uncharacterized protein from Acanthamoeba polyphaga (Amoeba).